Here is a 463-residue protein sequence, read N- to C-terminus: MNWEVEVIRKKEDLIRDTQEFLRINSVMDETTAGPGKPFGEGVNASLTSLLELGEKEGFTTKNLDGFAGHIEWGEGDDIIGVLCHVDVVPPGDGWTSDPFSAEIRNGRIYARGAIDDKGPTMAAFYALKIVKDMNLPLSKRVRMIIGTDEESDWRCVEHYFKHEEMPTMGFAPDADFPIINAEKGIIDASLLIPHRPNQAEPKAVLVSFQSGLRLNMVPDAAEAVIEGPKNEEILSSFKDMLRTTDQKGEAAIENGQLILRMYGLSCHAMEPNNGINAGILLCEFLQQTELDDAGKRFVQVVTDKFSGDTRGKKLDIDCEDEISGELTLNVGTLRYKEGQGGELGINIRYPVTAESKVIRDTFESASEFELGEFKDSKPHHVSADHPLVKTLQKVYEGQLGKKADLISIGGGTYARSLKAGVAFGPLFPGRPDSAHQKDEYIEIDDLLRSTALYAQAIYELAK.

H85 is a binding site for Zn(2+). The active site involves D87. D116 provides a ligand contact to Zn(2+). The Proton acceptor role is filled by E150. Residues E151, D174, and H436 each contribute to the Zn(2+) site.

The protein belongs to the peptidase M20A family. It depends on Zn(2+) as a cofactor.

This chain is Putative dipeptidase YtjP (ytjP), found in Bacillus subtilis (strain 168).